Reading from the N-terminus, the 134-residue chain is Small ribosomal subunit protein uS8c (134 aa).

Belongs to the universal ribosomal protein uS8 family. In terms of assembly, part of the 30S ribosomal subunit.

The protein resides in the plastid. It is found in the chloroplast. In terms of biological role, one of the primary rRNA binding proteins, it binds directly to 16S rRNA central domain where it helps coordinate assembly of the platform of the 30S subunit. This is Small ribosomal subunit protein uS8c (rps8) from Phaseolus vulgaris (Kidney bean).